A 321-amino-acid chain; its full sequence is Lipoyl synthase (321 aa).

Cysteine 68, cysteine 73, cysteine 79, cysteine 94, cysteine 98, cysteine 101, and serine 308 together coordinate [4Fe-4S] cluster. The Radical SAM core domain maps to 80–297 (FNHGTATFMI…KAEAMAMGFT (218 aa)).

This sequence belongs to the radical SAM superfamily. Lipoyl synthase family. It depends on [4Fe-4S] cluster as a cofactor.

It is found in the cytoplasm. It carries out the reaction [[Fe-S] cluster scaffold protein carrying a second [4Fe-4S](2+) cluster] + N(6)-octanoyl-L-lysyl-[protein] + 2 oxidized [2Fe-2S]-[ferredoxin] + 2 S-adenosyl-L-methionine + 4 H(+) = [[Fe-S] cluster scaffold protein] + N(6)-[(R)-dihydrolipoyl]-L-lysyl-[protein] + 4 Fe(3+) + 2 hydrogen sulfide + 2 5'-deoxyadenosine + 2 L-methionine + 2 reduced [2Fe-2S]-[ferredoxin]. It participates in protein modification; protein lipoylation via endogenous pathway; protein N(6)-(lipoyl)lysine from octanoyl-[acyl-carrier-protein]: step 2/2. In terms of biological role, catalyzes the radical-mediated insertion of two sulfur atoms into the C-6 and C-8 positions of the octanoyl moiety bound to the lipoyl domains of lipoate-dependent enzymes, thereby converting the octanoylated domains into lipoylated derivatives. In Cronobacter sakazakii (strain ATCC BAA-894) (Enterobacter sakazakii), this protein is Lipoyl synthase.